The chain runs to 461 residues: Peptidyl-prolyl cis-trans isomerase-like 4 (461 aa).

Positions 1–171 (MSVLLETSLG…KDIRIRHTVI (171 aa)) constitute a PPIase cyclophilin-type domain. A coiled-coil region spans residues 205-234 (EELDDNMDEESMEKLRREREARAQALTLEM). One can recognise an RRM domain in the interval 248–326 (NVLFVCKLNP…HRIHVDFSQS (79 aa)). Residues 341–461 (KRSGQRGGFG…DERYRERRRR (121 aa)) are disordered. Composition is skewed to basic and acidic residues over residues 365-384 (DNAREKENDYTLVFDKGDKA) and 398-461 (SNRD…RRRR).

The protein belongs to the cyclophilin-type PPIase family. PPIL4 subfamily.

The protein resides in the nucleus. The enzyme catalyses [protein]-peptidylproline (omega=180) = [protein]-peptidylproline (omega=0). Its function is as follows. PPIases accelerate the folding of proteins. It catalyzes the cis-trans isomerization of proline imidic peptide bonds in oligopeptides. In Aspergillus oryzae (strain ATCC 42149 / RIB 40) (Yellow koji mold), this protein is Peptidyl-prolyl cis-trans isomerase-like 4 (cyp6).